The chain runs to 380 residues: Acetylornithine deacetylase (380 aa).

Histidine 79 is a Zn(2+) binding site. The active site involves aspartate 81. Aspartate 109 lines the Zn(2+) pocket. Glutamate 139 is an active-site residue. Zn(2+) contacts are provided by glutamate 140, glutamate 164, and histidine 351.

Belongs to the peptidase M20A family. ArgE subfamily. Homodimer. It depends on Zn(2+) as a cofactor. The cofactor is Co(2+). Glutathione serves as cofactor.

The protein resides in the cytoplasm. The catalysed reaction is N(2)-acetyl-L-ornithine + H2O = L-ornithine + acetate. It participates in amino-acid biosynthesis; L-arginine biosynthesis; L-ornithine from N(2)-acetyl-L-ornithine (linear): step 1/1. In terms of biological role, catalyzes the hydrolysis of the amide bond of N(2)-acetylated L-amino acids. Cleaves the acetyl group from N-acetyl-L-ornithine to form L-ornithine, an intermediate in L-arginine biosynthesis pathway, and a branchpoint in the synthesis of polyamines. This chain is Acetylornithine deacetylase, found in Myxococcus xanthus.